A 487-amino-acid chain; its full sequence is MAMETKSCQQLHIFFLPFMARGHSIPLTDIAKLFSSHGARCTIVTTPLNAPLFSKATQRGEIELVLIKFPSAEAGLPQDCESADLITTQDMLGKFVKATFLIEPHFEKILDEHRPHCLVADAFFTWATDVAAKFRIPRLYFHGTGFFALCASLSVMMYQPHSNLSSDSESFVIPNLPDEIKMTRSQLPVFPDESEFMKMLKASIEIEERSYGVIVNSFYELEPAYANHYRKVFGRKAWHIGPVSFCNKAIEDKAERGSIKSSTAEKHECLKWLDSKKPRSVVYVSFGSMVRFADSQLLEIATGLEASGQDFIWVVKKEKKEVEEWLPEGFEKRMEGKGLIIRDWAPQVLILEHEAIGAFVTHCGWNSILEAVSAGVPMITWPVFGEQFYNEKLVTEIHRIGVPVGSEKWALSFVDVNAETEGRVRREAIEEAVTRIMVGDEAVETRSRVKELGENARRAVEEGGSSFLDLSALVGELNDLAFGGLVE.

Residue His23 is the Proton acceptor of the active site. His23 is a binding site for an anthocyanidin. The active-site Charge relay is the Asp121. Residues Ala345, Gln347, His362, Trp365, Asn366, Ser367, and Glu370 each coordinate UDP-alpha-D-glucose. Gly385 provides a ligand contact to an anthocyanidin. Positions 386 and 387 each coordinate UDP-alpha-D-glucose.

The protein belongs to the UDP-glycosyltransferase family. As to expression, strongly expressed in achenes and receptacles.

The enzyme catalyses a flavonol + UDP-alpha-D-glucose = a flavonol 3-O-beta-D-glucoside + UDP + H(+). In terms of biological role, broad spectrum multifunctional glucosyltransferase. Catalyzes the formation of flavonol 3-O- and 4'-O-glucosides during fruit ripening. Accepted substrates include several flavonoids, hydroxycoumarins and beta-naphthols. Uses UDP-Glc as a sugar donor, but not UDP-Gal or UDP-GlcUA. May also be involved in detoxification of xenobiotics. The sequence is that of UDP-glucose flavonoid 3-O-glucosyltransferase 7 from Fragaria ananassa (Strawberry).